The primary structure comprises 145 residues: Antimicrobial peptide NK-lysin (145 aa).

An N-terminal signal peptide occupies residues 1–22 (MTSRALLLLASALLGTPGLTFS). Residues 23-62 (GLNPESYDLATAHLSDGEQFCQGLTQEDLQGDLLTERERQ) constitute a propeptide that is removed on maturation. In terms of domain architecture, Saposin B-type spans 62–142 (QGIACWSCRK…VDIKLCKHKA (81 aa)). Intrachain disulfides connect C66/C138, C69/C132, and C97/C107. A propeptide spanning residues 141 to 145 (KAGLI) is cleaved from the precursor.

The protein resides in the secreted. Its function is as follows. May be an effector molecule of cytotoxic activity. Has antimicrobial activity. This Equus caballus (Horse) protein is Antimicrobial peptide NK-lysin (NKL).